Reading from the N-terminus, the 452-residue chain is Probable ECA polymerase (452 aa).

11 helical membrane-spanning segments follow: residues 6–26 (FSGLLVVWLLSTLFIATLTWF), 37–57 (VFFSLLFLLTFFFGFPLTSVL), 63–83 (VGVAPPEILLQALLSAACFYG), 118–138 (VILMGIALVSVAIFFMHNGFL), 155–175 (GVALKRFFYFFIPAMLVVYFL), 181–201 (AWLFFLVSTVAFGLLTYMIVG), 207–227 (IIIAFAIFLFIGIIRGWISLW), 228–248 (MLAAAGVLGIVGMFWLALKRY), 341–361 (LVVMGGALFIPLGAIVVGLII), 378–398 (YKAAILHSFCFGAIFNMIVLA), and 410–430 (VFFLVVFGASLLVAKLLFWLF).

This sequence belongs to the WzyE family. As to quaternary structure, probably part of a complex composed of WzxE, WzyE and WzzE.

The protein resides in the cell inner membrane. The protein operates within bacterial outer membrane biogenesis; enterobacterial common antigen biosynthesis. Its function is as follows. Probably involved in the polymerization of enterobacterial common antigen (ECA) trisaccharide repeat units. The chain is Probable ECA polymerase from Salmonella heidelberg (strain SL476).